The chain runs to 389 residues: 5-hydroxytryptamine receptor 1B (389 aa).

Over 1–45 the chain is Extracellular; sequence MGNPEASCTPPAVLGSQTGLPHANVSAPPNNCSAPSHIYQDSIAL. N24 and N31 each carry an N-linked (GlcNAc...) asparagine glycan. The chain crosses the membrane as a helical span at residues 46-71; the sequence is PWKVLLVVLLALITLATTLSNAFVIA. The Cytoplasmic segment spans residues 72 to 85; the sequence is TVYRTRKLHTPANY. The chain crosses the membrane as a helical span at residues 86 to 110; that stretch reads LIASLAFTDLLVSILVMPISTMYTV. Residues 111-118 are Extracellular-facing; the sequence is TGRWTLGQ. The helical transmembrane segment at 119–144 threads the bilayer; that stretch reads ALCDFWLSSDITCCTASIMHLCVIAL. A disulfide bridge connects residues C121 and C198. Residues D128 and T133 each coordinate ergotamine. The short motif at 145–147 is the DRY motif; important for ligand-induced conformation changes and signaling element; sequence DRY. Residues 145 to 164 lie on the Cytoplasmic side of the membrane; it reads DRYWAITDAVGYSAKRTPRR. Residues 165–183 traverse the membrane as a helical segment; the sequence is AAGMIALVWVFSICISLPP. Residues 184 to 204 are Extracellular-facing; the sequence is FFWRQAKAEEEVLDCLVNTDH. Ergotamine is bound at residue V200. The chain crosses the membrane as a helical span at residues 205-228; that stretch reads VLYTVYSTGGAFYLPTLLLIALYG. Topologically, residues 229-314 are cytoplasmic; it reads RIYVEARSRI…AARERKATKT (86 aa). A helical membrane pass occupies residues 315 to 336; that stretch reads LGVILGAFIVCWLPFFIISLVM. Topologically, residues 337–346 are extracellular; sequence PICKDACWFH. Residues 347–369 traverse the membrane as a helical segment; sequence MAIFDFFTWLGYLNSLINPIIYT. The short motif at 364–368 is the NPxxY motif; important for ligand-induced conformation changes and signaling element; it reads NPIIY. Topologically, residues 370-389 are cytoplasmic; the sequence is MSNEDFKQAFHKLIRFKCTT. C387 carries S-palmitoyl cysteine lipidation.

The protein belongs to the G-protein coupled receptor 1 family. As to quaternary structure, homodimer. Heterodimer with HTR1D. In terms of processing, phosphorylated. Desensitization of the receptor may be mediated by its phosphorylation. Post-translationally, palmitoylated.

Its subcellular location is the cell membrane. In terms of biological role, G-protein coupled receptor for 5-hydroxytryptamine (serotonin). Also functions as a receptor for ergot alkaloid derivatives, various anxiolytic and antidepressant drugs and other psychoactive substances, such as lysergic acid diethylamide (LSD). Ligand binding causes a conformation change that triggers signaling via guanine nucleotide-binding proteins (G proteins) and modulates the activity of downstream effectors, such as adenylate cyclase. HTR1B is coupled to G(i)/G(o) G alpha proteins and mediates inhibitory neurotransmission by inhibiting adenylate cyclase activity. Arrestin family members inhibit signaling via G proteins and mediate activation of alternative signaling pathways. Regulates the release of 5-hydroxytryptamine, dopamine and acetylcholine in the brain, and thereby affects neural activity, nociceptive processing, pain perception, mood and behavior. Besides, plays a role in vasoconstriction of cerebral arteries. This Cavia porcellus (Guinea pig) protein is 5-hydroxytryptamine receptor 1B (HTR1B).